A 135-amino-acid polypeptide reads, in one-letter code: Small ribosomal subunit protein uS11 (135 aa).

Belongs to the universal ribosomal protein uS11 family. Part of the 30S ribosomal subunit. Interacts with proteins S7 and S18. Binds to IF-3.

Located on the platform of the 30S subunit, it bridges several disparate RNA helices of the 16S rRNA. Forms part of the Shine-Dalgarno cleft in the 70S ribosome. The protein is Small ribosomal subunit protein uS11 of Polynucleobacter necessarius subsp. necessarius (strain STIR1).